We begin with the raw amino-acid sequence, 342 residues long: Ribosomal RNA small subunit methyltransferase H (342 aa).

Residues glycine 42–histidine 44, aspartate 61, phenylalanine 88, aspartate 119, and glutamine 126 contribute to the S-adenosyl-L-methionine site.

It belongs to the methyltransferase superfamily. RsmH family.

The protein resides in the cytoplasm. It catalyses the reaction cytidine(1402) in 16S rRNA + S-adenosyl-L-methionine = N(4)-methylcytidine(1402) in 16S rRNA + S-adenosyl-L-homocysteine + H(+). Functionally, specifically methylates the N4 position of cytidine in position 1402 (C1402) of 16S rRNA. This Corynebacterium jeikeium (strain K411) protein is Ribosomal RNA small subunit methyltransferase H.